A 1180-amino-acid chain; its full sequence is DNA-directed RNA polymerase subunit beta' (1180 aa).

Residues Cys-60, Cys-62, Cys-75, and Cys-78 each contribute to the Zn(2+) site. Mg(2+)-binding residues include Asp-449, Asp-451, and Asp-453. Positions 792, 872, 879, and 882 each coordinate Zn(2+).

It belongs to the RNA polymerase beta' chain family. The RNAP catalytic core consists of 2 alpha, 1 beta, 1 beta' and 1 omega subunit. When a sigma factor is associated with the core the holoenzyme is formed, which can initiate transcription. It depends on Mg(2+) as a cofactor. Zn(2+) serves as cofactor.

It carries out the reaction RNA(n) + a ribonucleoside 5'-triphosphate = RNA(n+1) + diphosphate. In terms of biological role, DNA-dependent RNA polymerase catalyzes the transcription of DNA into RNA using the four ribonucleoside triphosphates as substrates. This Heliobacterium modesticaldum (strain ATCC 51547 / Ice1) protein is DNA-directed RNA polymerase subunit beta'.